Consider the following 528-residue polypeptide: Endoglucanase 24 (528 aa).

The signal sequence occupies residues 1–24; the sequence is MGSKTKGCCGWLIVALVASLVATA. The Nucleophile role is filled by Asp109. An N-linked (GlcNAc...) asparagine glycan is attached at Asn259. The active site involves His446. The N-linked (GlcNAc...) asparagine glycan is linked to Asn487. Catalysis depends on residues Asp492 and Glu501.

Belongs to the glycosyl hydrolase 9 (cellulase E) family.

The protein resides in the secreted. It catalyses the reaction Endohydrolysis of (1-&gt;4)-beta-D-glucosidic linkages in cellulose, lichenin and cereal beta-D-glucans.. The chain is Endoglucanase 24 from Oryza sativa subsp. japonica (Rice).